Consider the following 87-residue polypeptide: UPF0250 protein ETA_23570 (87 aa).

The protein belongs to the UPF0250 family.

This chain is UPF0250 protein ETA_23570, found in Erwinia tasmaniensis (strain DSM 17950 / CFBP 7177 / CIP 109463 / NCPPB 4357 / Et1/99).